Reading from the N-terminus, the 219-residue chain is MTEKMTRMTQFVKEEIANAITHGIGAILSIPALIILIIHASKHGTASAVVAFTVYGVSMFLLYLFSTLLHSIHHPKVEKLFTILDHSAIYLLIAGTYTPFLLITLRGPLGWTLLAIIWTLAIGGIIFKIFFVRRFIKASTLCYIIMGWLIIVAIKPLYENLTGHGFSLLLAGGILYSVGAIFFLWEKLPFNHAIWHLFVLGGSAMMFFCVLFYVLPTAS.

7 helical membrane passes run 19-39 (AITH…LIIH), 49-69 (VVAF…STLL), 83-103 (ILDH…FLLI), 112-132 (TLLA…IFFV), 138-158 (ASTL…KPLY), 165-185 (GFSL…FFLW), and 194-214 (IWHL…LFYV).

The protein belongs to the UPF0073 (Hly-III) family.

Its subcellular location is the cell membrane. Its function is as follows. Might be virulent against a mammalian host; when expressed in E.coli, the soluble extract has hemolytic activity on human erythrocytes. The activity is not inhibited by cholesterol or activated by 2-mercaptoethanol. Might be pore-forming protein. Its in vivo role in virulence is untested, nor has it been shown to be secreted by B.cereus. The protein is Hemolysin-3 of Bacillus cereus.